A 375-amino-acid chain; its full sequence is Trichodiene synthase (375 aa).

This sequence belongs to the trichodiene synthase family.

The catalysed reaction is (2E,6E)-farnesyl diphosphate = trichodiene + diphosphate. Its pathway is sesquiterpene biosynthesis; trichothecene biosynthesis. Functionally, TS is a member of the terpene cyclase group of enzymes. It catalyzes the isomerization and cyclization of farnesyl pyro-phosphate to form trichodiene, the first cyclic intermediate in the biosynthetic pathway for trichothecenes. It serves to branch trichothecene biosynthesis from the isoprenoid pathway. This chain is Trichodiene synthase (TRI5), found in Fusarium culmorum.